We begin with the raw amino-acid sequence, 186 residues long: Casparian strip membrane protein 1 (186 aa).

The Cytoplasmic portion of the chain corresponds to 1-26 (MKSSPAELISEAKSSTQNSKMKRAVS). A helical transmembrane segment spans residues 27-47 (VLDFILRLIAVVATLASAIAM). Residues 48–74 (GTTDESLPFFTQFIRFRAEYDDLPTLR) are Extracellular-facing. The helical transmembrane segment at 75–95 (LFVVASAFASGYLILSLPLSI) threads the bilayer. Topologically, residues 96–107 (LHITRSSARRTR) are cytoplasmic. Residues 108 to 128 (VILIILDMVMLTSLTAASSAA) form a helical membrane-spanning segment. Over 129 to 161 (AAIVYLAHKGNAKANWFAFCQQYDSFCERISGS) the chain is Extracellular. The chain crosses the membrane as a helical span at residues 162–182 (LIGSFIAIPLFIMLILFSALV). Over 183–186 (LSKR) the chain is Cytoplasmic.

This sequence belongs to the Casparian strip membrane proteins (CASP) family. Homodimer and heterodimers.

The protein localises to the cell membrane. In terms of biological role, regulates membrane-cell wall junctions and localized cell wall deposition. Required for establishment of the Casparian strip membrane domain (CSD) and the subsequent formation of Casparian strips, a cell wall modification of the root endodermis that determines an apoplastic barrier between the intraorganismal apoplasm and the extraorganismal apoplasm and prevents lateral diffusion. The sequence is that of Casparian strip membrane protein 1 from Lotus japonicus (Lotus corniculatus var. japonicus).